The chain runs to 131 residues: Phosphoribosyl-AMP cyclohydrolase (131 aa).

Aspartate 80 is a Mg(2+) binding site. Position 81 (cysteine 81) interacts with Zn(2+). Mg(2+)-binding residues include aspartate 82 and aspartate 84. Zn(2+) is bound by residues cysteine 98 and cysteine 105.

This sequence belongs to the PRA-CH family. Homodimer. Mg(2+) is required as a cofactor. The cofactor is Zn(2+).

The protein localises to the cytoplasm. The catalysed reaction is 1-(5-phospho-beta-D-ribosyl)-5'-AMP + H2O = 1-(5-phospho-beta-D-ribosyl)-5-[(5-phospho-beta-D-ribosylamino)methylideneamino]imidazole-4-carboxamide. It participates in amino-acid biosynthesis; L-histidine biosynthesis; L-histidine from 5-phospho-alpha-D-ribose 1-diphosphate: step 3/9. Catalyzes the hydrolysis of the adenine ring of phosphoribosyl-AMP. This is Phosphoribosyl-AMP cyclohydrolase from Azoarcus sp. (strain BH72).